The chain runs to 317 residues: L-lactate dehydrogenase (317 aa).

NAD(+) contacts are provided by residues valine 17, aspartate 38, lysine 43, tyrosine 69, and 83–84 (GA). Residues glutamine 86 and arginine 92 each contribute to the substrate site. Residues serine 105, 122–124 (ATN), and serine 147 contribute to the NAD(+) site. 124–127 (NPVD) is a substrate binding site. 152-155 (DSAR) is a binding site for substrate. Positions 157 and 172 each coordinate beta-D-fructose 1,6-bisphosphate. Histidine 179 acts as the Proton acceptor in catalysis. Tyrosine 224 is subject to Phosphotyrosine. Residue threonine 233 participates in substrate binding.

It belongs to the LDH/MDH superfamily. LDH family. As to quaternary structure, homotetramer.

It is found in the cytoplasm. The enzyme catalyses (S)-lactate + NAD(+) = pyruvate + NADH + H(+). It participates in fermentation; pyruvate fermentation to lactate; (S)-lactate from pyruvate: step 1/1. With respect to regulation, allosterically activated by fructose 1,6-bisphosphate (FBP). Functionally, catalyzes the conversion of lactate to pyruvate. The sequence is that of L-lactate dehydrogenase from Bacillus velezensis (strain DSM 23117 / BGSC 10A6 / LMG 26770 / FZB42) (Bacillus amyloliquefaciens subsp. plantarum).